The chain runs to 750 residues: Small G protein signaling modulator 3 (750 aa).

A Rab-GAP TBC domain is found at 114-305 (GIPHGMRPQL…RIWDLFFYEG (192 aa)). Position 406 is a phosphoserine (Ser406). Residues 415 to 439 (EDDLEALKAKNIKQTELVADLREAI) are a coiled coil. The SH3 domain maps to 480 to 539 (SHRRRAKALLDFERHDDDELGFRKNDIITIISQKDEHCWVGELNGLRGWFPAKFVEVLDE). In terms of domain architecture, RUN spans 555–718 (GVTDLVRGTL…FAFSLSQDWE (164 aa)).

Belongs to the small G protein signaling modulator family. In terms of assembly, interacts with GJA1. Interaction with GJA1 induces its degradation. Interacts via its RUN domain with the C-terminal region of NF2. Interacts with RAB3A, RAB4A, RAB5A, RAB8A, RAB11A, RAP1A, RAP1B, RAP2A, RAP2B and PDCD6I. No interaction with RAB27A. Widely expressed.

It is found in the cytoplasm. Functionally, may play a cooperative role in NF2-mediated growth suppression of cells. The sequence is that of Small G protein signaling modulator 3 from Mus musculus (Mouse).